A 506-amino-acid polypeptide reads, in one-letter code: Galactose/methyl galactoside import ATP-binding protein MglA (506 aa).

ABC transporter domains are found at residues 14 to 249 (LTMT…VGRE) and 260 to 506 (VPKE…AKYL). ATP is bound at residue 46–53 (GENGAGKS).

It belongs to the ABC transporter superfamily. Galactose/methyl galactoside importer (TC 3.A.1.2.3) family. In terms of assembly, the complex is composed of one ATP-binding protein (MglA), two transmembrane proteins (MglC) and a solute-binding protein (MglB).

The protein resides in the cell inner membrane. The enzyme catalyses D-galactose(out) + ATP + H2O = D-galactose(in) + ADP + phosphate + H(+). The catalysed reaction is methyl beta-D-galactoside(out) + ATP + H2O = methyl beta-D-galactoside(in) + ADP + phosphate + H(+). Its function is as follows. Part of the ABC transporter complex MglABC involved in galactose/methyl galactoside import. Responsible for energy coupling to the transport system. The chain is Galactose/methyl galactoside import ATP-binding protein MglA from Haemophilus influenzae (strain 86-028NP).